Consider the following 302-residue polypeptide: Nucleotide-binding protein Rsph17025_2562 (302 aa).

Residue 15–22 (GPSGAGRT) participates in ATP binding. GTP is bound at residue 62–65 (DVRN).

It belongs to the RapZ-like family.

Functionally, displays ATPase and GTPase activities. The protein is Nucleotide-binding protein Rsph17025_2562 of Cereibacter sphaeroides (strain ATCC 17025 / ATH 2.4.3) (Rhodobacter sphaeroides).